The following is a 643-amino-acid chain: Threonine--tRNA ligase 1 (643 aa).

A TGS domain is found at 3–64 (DMVKITFPDG…NEDGTVEIIT (62 aa)). A catalytic region spans residues 245–542 (DHRKLGKELK…LIEEHKGALP (298 aa)). C338, H389, and H519 together coordinate Zn(2+).

It belongs to the class-II aminoacyl-tRNA synthetase family. Homodimer. Zn(2+) is required as a cofactor.

It is found in the cytoplasm. It carries out the reaction tRNA(Thr) + L-threonine + ATP = L-threonyl-tRNA(Thr) + AMP + diphosphate + H(+). Its function is as follows. Catalyzes the attachment of threonine to tRNA(Thr) in a two-step reaction: L-threonine is first activated by ATP to form Thr-AMP and then transferred to the acceptor end of tRNA(Thr). Also edits incorrectly charged L-seryl-tRNA(Thr). The polypeptide is Threonine--tRNA ligase 1 (thrS) (Bacillus subtilis (strain 168)).